We begin with the raw amino-acid sequence, 87 residues long: Small ribosomal subunit protein uS15c (87 aa).

The protein belongs to the universal ribosomal protein uS15 family. As to quaternary structure, part of the 30S ribosomal subunit.

It localises to the plastid. It is found in the chloroplast. This Solanum tuberosum (Potato) protein is Small ribosomal subunit protein uS15c (rps15).